Here is a 343-residue protein sequence, read N- to C-terminus: Probable potassium channel protein 2 (343 aa).

Over 1 to 7 the chain is Cytoplasmic; that stretch reads METSKKL. A helical membrane pass occupies residues 8 to 28; the sequence is VIVAVLSITLILTYAYLISII. At 29–61 the chain is on the extracellular side; it reads EGVDYFTALYFSVITITTTGYGDFTPKTFLGRT. The Selectivity filter signature appears at 46 to 51; sequence TTGYGD. A helical transmembrane segment spans residues 62 to 82; that stretch reads LTVVYLCVGVGIVMYLFSLIA. Residues 83-343 lie on the Cytoplasmic side of the membrane; that stretch reads EFIVEGKFEE…NLVKKKKKKL (261 aa). The RCK N-terminal domain maps to 107-227; sequence KDHYIICGYG…KIAGANRVVS (121 aa). One can recognise an RCK C-terminal domain in the interval 253–338; the sequence is IKIAKDEYEE…LKYLENLVKK (86 aa).

It localises to the cell membrane. In terms of biological role, probable potassium channel protein. The protein is Probable potassium channel protein 2 of Methanocaldococcus jannaschii (strain ATCC 43067 / DSM 2661 / JAL-1 / JCM 10045 / NBRC 100440) (Methanococcus jannaschii).